Consider the following 397-residue polypeptide: Elongation factor Tu (397 aa).

Residues 10-206 (KPHVNIGTIG…AVDTAIPEPE (197 aa)) form the tr-type G domain. The interval 19 to 26 (GHIDHGKT) is G1. Residue 19–26 (GHIDHGKT) participates in GTP binding. T26 is a Mg(2+) binding site. A G2 region spans residues 62-66 (GITIS). Positions 83-86 (DCPG) are G3. GTP-binding positions include 83–87 (DCPGH) and 138–141 (NKAD). Positions 138 to 141 (NKAD) are G4. The interval 176-178 (SAL) is G5.

The protein belongs to the TRAFAC class translation factor GTPase superfamily. Classic translation factor GTPase family. EF-Tu/EF-1A subfamily. In terms of assembly, monomer.

It is found in the cytoplasm. The enzyme catalyses GTP + H2O = GDP + phosphate + H(+). Functionally, GTP hydrolase that promotes the GTP-dependent binding of aminoacyl-tRNA to the A-site of ribosomes during protein biosynthesis. This chain is Elongation factor Tu, found in Kineococcus radiotolerans (strain ATCC BAA-149 / DSM 14245 / SRS30216).